We begin with the raw amino-acid sequence, 228 residues long: 7-cyano-7-deazaguanine synthase (228 aa).

Position 9-19 (9-19 (LSGGPDSTTVL)) interacts with ATP. Zn(2+) contacts are provided by C193, C203, C206, and C209.

Belongs to the QueC family. Requires Zn(2+) as cofactor.

It catalyses the reaction 7-carboxy-7-deazaguanine + NH4(+) + ATP = 7-cyano-7-deazaguanine + ADP + phosphate + H2O + H(+). It functions in the pathway purine metabolism; 7-cyano-7-deazaguanine biosynthesis. Its function is as follows. Catalyzes the ATP-dependent conversion of 7-carboxy-7-deazaguanine (CDG) to 7-cyano-7-deazaguanine (preQ(0)). In Rickettsia peacockii (strain Rustic), this protein is 7-cyano-7-deazaguanine synthase.